The following is a 632-amino-acid chain: Epsin-3 (632 aa).

A 1,2-diacyl-sn-glycero-3-phospho-(1D-myo-inositol-4,5-bisphosphate) is bound by residues arginine 8, lysine 11, arginine 25, asparagine 30, arginine 63, and histidine 73. Residues 12–144 form the ENTH domain; sequence NIVHNYSEAE…KDEERLRQER (133 aa). The interval 172–214 is disordered; that stretch reads YGEDYSRSRGSPSSYNSSSSSPRYTSDLEQARPQTSGEEELQL. Low complexity predominate over residues 179–196; it reads SRGSPSSYNSSSSSPRYT. Phosphoserine is present on residues serine 191 and serine 192. 2 UIM domains span residues 209–228 and 236–255; these read EEEL…AEKP and DEDL…HEKE. The interval 257–296 is disordered; that stretch reads RSWQGDGSPMANGAGAVVHHQRDREPEREERKEEEKLKTS. Phosphoserine is present on serine 264. A compositionally biased stretch (basic and acidic residues) spans 276-294; the sequence is HQRDREPEREERKEEEKLK. 8 consecutive repeat copies span residues 321-323, 344-346, 371-373, 387-389, 404-406, 524-526, 537-539, and 629-631. Positions 321-406 are 5 X 3 AA repeats of [DE]-P-W; that stretch reads DPWDIPGFRP…KLPSTGADPW (86 aa). Disordered stretches follow at residues 326–501, 525–560, and 604–632; these read PGFR…SFLG, PFLT…PALG, and AFAP…NPFL. Positions 353–371 are enriched in polar residues; that stretch reads TVLSRSQPWDLTPMLSSSE. Residues 524 to 631 form a 3 X 3 AA repeats of N-P-F region; that stretch reads NPFLTGLSAP…PPPQTGTNPF (108 aa).

Belongs to the epsin family. As to expression, detected in migrating keratinocytes from wounded skin, but not in differentiating keratinocytes or in normal skin. Detected in chronic wounds, basal cell carcinoma and ulcerative colitis.

The protein resides in the cytoplasm. The protein localises to the perinuclear region. Its subcellular location is the cytoplasmic vesicle. It is found in the clathrin-coated vesicle. It localises to the nucleus. In Homo sapiens (Human), this protein is Epsin-3 (EPN3).